The following is a 75-amino-acid chain: MSKPCISEEDFKDCQAFFAKPLPILVAEISKSLANIDFVDTASQQVDQLGIFLDLIGTECFKEVLCPHTSANLTN.

The protein belongs to the herpesviridae UL91 family.

This is an uncharacterized protein from Saimiriine herpesvirus 2 (strain 11) (SaHV-2).